The following is a 137-amino-acid chain: Large-conductance mechanosensitive channel (137 aa).

The next 2 membrane-spanning stretches (helical) occupy residues 9–29 (AFAVKGNVVDMAVGIIIGAAF) and 79–99 (IQTVLDFVIVAFAIFMGVKAI).

Belongs to the MscL family. In terms of assembly, homopentamer.

The protein localises to the cell inner membrane. Functionally, channel that opens in response to stretch forces in the membrane lipid bilayer. May participate in the regulation of osmotic pressure changes within the cell. In Pseudomonas aeruginosa (strain ATCC 15692 / DSM 22644 / CIP 104116 / JCM 14847 / LMG 12228 / 1C / PRS 101 / PAO1), this protein is Large-conductance mechanosensitive channel.